A 384-amino-acid chain; its full sequence is 8-amino-7-oxononanoate synthase (384 aa).

Substrate is bound at residue R21. 108-109 (GF) is a pyridoxal 5'-phosphate binding site. H133 contacts substrate. Residues S179, H207, and T233 each coordinate pyridoxal 5'-phosphate. K236 is subject to N6-(pyridoxal phosphate)lysine. T350 provides a ligand contact to substrate.

It belongs to the class-II pyridoxal-phosphate-dependent aminotransferase family. BioF subfamily. As to quaternary structure, homodimer. Pyridoxal 5'-phosphate is required as a cofactor.

The enzyme catalyses 6-carboxyhexanoyl-[ACP] + L-alanine + H(+) = (8S)-8-amino-7-oxononanoate + holo-[ACP] + CO2. Its pathway is cofactor biosynthesis; biotin biosynthesis. Functionally, catalyzes the decarboxylative condensation of pimeloyl-[acyl-carrier protein] and L-alanine to produce 8-amino-7-oxononanoate (AON), [acyl-carrier protein], and carbon dioxide. This Erwinia tasmaniensis (strain DSM 17950 / CFBP 7177 / CIP 109463 / NCPPB 4357 / Et1/99) protein is 8-amino-7-oxononanoate synthase.